A 597-amino-acid polypeptide reads, in one-letter code: MAGYDVVVVGGGHAGLEAAWAAAALGVRVALVTVNPDRIGMMPCNPAVGGPGKSQLVAEVVALGGLMGRAADAAAIHTRVLNRSKGPAVQSLRVQVDRDLYALKAQEILAERPVEVLRGEVAALWVEGGRLLGVRTVDGRTLPAKAVVVAGGTFLSGVVWYGRKSRPAGRQGEPPARFLSQSLKAVGHTLRRFKTGTPPRIRADSVDFGRLEVVPPEVPPGSFTGNPGPHAARLPTWQTRTTARTHRLIRENLHLSPLYAGDIQGIGPRYCPSIEDKVVRFADKESHLLFVEPDGLSTTEVYLQGFSSSLPPELQEEMVRSLPGFERAVIQRYAYAVEYDSLDPTELTRGLQSRLLPGLFSAGQVNGTSGYEEAAAQGLLAGLNAARFALGLPEVHLPRESGYIGVLVDDLVGRGTDEPYRMMTSRVELRLLCRADNADERLTPLAVAWGLRPKEDLERVEAKYRRVAAELRRLQALRVEGVSGLQWLRRPENTYRALAERFPPSEPLSPEEAYQVEVRAKYAGYIERQERLREKMKDLEAFRIPEGMDFPKVPGLSREAAEKLSRHRPKSLAEAARIPGVRDSDLTALAVHLRRGA.

10–15 contacts FAD; the sequence is GGGHAG. 267 to 281 contributes to the NAD(+) binding site; the sequence is GPRYCPSIEDKVVRF.

The protein belongs to the MnmG family. In terms of assembly, homodimer. Heterotetramer of two MnmE and two MnmG subunits. FAD is required as a cofactor.

It is found in the cytoplasm. Functionally, NAD-binding protein involved in the addition of a carboxymethylaminomethyl (cmnm) group at the wobble position (U34) of certain tRNAs, forming tRNA-cmnm(5)s(2)U34. This is tRNA uridine 5-carboxymethylaminomethyl modification enzyme MnmG from Thermus thermophilus (strain ATCC 27634 / DSM 579 / HB8).